We begin with the raw amino-acid sequence, 520 residues long: Peptide chain release factor 3 (520 aa).

One can recognise a tr-type G domain in the interval 8 to 273; that stretch reads EIRKTFAIIS…AYVDHAPMPS (266 aa). GTP is bound by residues 17 to 24, 85 to 89, and 139 to 142; these read SHPDAGKT, DTPGH, and NKLD.

It belongs to the TRAFAC class translation factor GTPase superfamily. Classic translation factor GTPase family. PrfC subfamily.

It localises to the cytoplasm. Functionally, increases the formation of ribosomal termination complexes and stimulates activities of RF-1 and RF-2. It binds guanine nucleotides and has strong preference for UGA stop codons. It may interact directly with the ribosome. The stimulation of RF-1 and RF-2 is significantly reduced by GTP and GDP, but not by GMP. The sequence is that of Peptide chain release factor 3 from Macrococcus caseolyticus (strain JCSC5402) (Macrococcoides caseolyticum).